Consider the following 1209-residue polypeptide: Sterol 3-beta-glucosyltransferase (1209 aa).

In terms of domain architecture, GRAM 1 spans 167-217 (ERLIKKFLPNDDEKYIEEYPCWLLRDIMIQGHAYLTNKHLFFFAFIPNFES). Positions 218-315 (DFNVTGSLRL…WVSSIKKQMF (98 aa)) constitute a PH domain. The GRAM 2 domain maps to 568-634 (VRFRQHFSFD…EDVENCYKET (67 aa)). Positions 745, 746, 748, 1019, 1048, 1050, 1063, 1066, 1067, 1068, 1087, and 1088 each coordinate UDP-alpha-D-glucose. The interval 1186-1209 (AKGNEKEEYSSEGSGSNDGSWLLI) is disordered. The span at 1196–1209 (SEGSGSNDGSWLLI) shows a compositional bias: low complexity.

This sequence belongs to the glycosyltransferase 28 family.

It localises to the cytoplasm. The protein localises to the membrane. The enzyme catalyses a sterol + UDP-alpha-D-glucose = a sterol 3-beta-D-glucoside + UDP + H(+). It carries out the reaction ergosterol + UDP-alpha-D-glucose = ergosteryl 3-beta-D-glucoside + UDP + H(+). In terms of biological role, sterol glycosyltransferase responsible for the glycosylation of ergosterol to form ergosterol-glucoside. The sequence is that of Sterol 3-beta-glucosyltransferase from Kluyveromyces lactis (strain ATCC 8585 / CBS 2359 / DSM 70799 / NBRC 1267 / NRRL Y-1140 / WM37) (Yeast).